Reading from the N-terminus, the 332-residue chain is Tsukubadiene synthase (332 aa).

Mg(2+) contacts are provided by aspartate 75 and glutamate 80. The DDXXXE motif signature appears at 75–80 (DDHLDE). Arginine 165 provides a ligand contact to substrate. Residues serine 212, serine 216, and glutamate 220 each contribute to the Mg(2+) site. Residues 212–220 (SDLHSFQLE) carry the SXXXSXXXE motif motif. 298 to 299 (RY) is a binding site for substrate.

It belongs to the terpene synthase family. Mg(2+) is required as a cofactor.

It catalyses the reaction (2E,6E,10E)-geranylgeranyl diphosphate = tsukubadiene + diphosphate. In terms of biological role, catalyzes the formation of the 5-9-5 ring skeleton (3S,6S,11R,14S)-tsukubadiene from geranylgeranyl diphosphate (GGPP) via a 1,11-cyclization and a 10Re,14Re-cyclization. The sequence is that of Tsukubadiene synthase from Streptomyces tsukubensis (strain DSM 42081 / NBRC 108919 / NRRL 18488 / 9993).